Consider the following 306-residue polypeptide: Putative type I specificity subunit S.MpnORF285P (306 aa).

Belongs to the type-I restriction system S methylase family. As to quaternary structure, the methyltransferase is composed of M and S polypeptides.

Its function is as follows. The specificity (S) subunit of a type I methyltransferase (MTase); this subunit dictates DNA sequence specificity. The single R subunit has multiple frameshifts and is probably not expressed. The protein is Putative type I specificity subunit S.MpnORF285P of Mycoplasma pneumoniae (strain ATCC 29342 / M129 / Subtype 1) (Mycoplasmoides pneumoniae).